Consider the following 429-residue polypeptide: C4-dicarboxylate transport protein (429 aa).

The next 8 membrane-spanning stretches (helical) occupy residues Val-3 to Leu-23, Leu-44 to Met-64, Ile-76 to Val-96, Ala-144 to Leu-164, Val-184 to Met-204, Leu-222 to Ala-242, Thr-331 to Phe-351, and Ile-352 to Ile-372.

The protein belongs to the dicarboxylate/amino acid:cation symporter (DAACS) (TC 2.A.23) family.

The protein resides in the cell inner membrane. In terms of biological role, responsible for the transport of dicarboxylates such as succinate, fumarate, and malate from the periplasm across the membrane. The chain is C4-dicarboxylate transport protein from Yersinia pestis bv. Antiqua (strain Antiqua).